The following is a 140-amino-acid chain: Vacuolar protein sorting-associated protein 55 homolog (140 aa).

Residues 1 to 16 (MADVPGYLRTCLDMGK) are Cytoplasmic-facing. A helical transmembrane segment spans residues 17 to 37 (IAFLAILVSTGIVLQILACAL). Topologically, residues 38-40 (FNN) are lumenal. Residues 41-61 (WWPMLSVIMYVLLPMPLLFFG) form a helical membrane-spanning segment. The Cytoplasmic portion of the chain corresponds to 62-75 (GSDSTSLFNESDNS). A helical transmembrane segment spans residues 76 to 98 (WINAAKFLTGASAVGSVAIPSIL). The Lumenal portion of the chain corresponds to 99–108 (KHAGLIGWGA). Residues 109–129 (LALDLSSYVVFLVAILGYICI) form a helical membrane-spanning segment. At 130–140 (GDASDNYYSYI) the chain is on the cytoplasmic side.

The protein belongs to the OB-RGRP/VPS55 family.

It localises to the endosome membrane. In terms of biological role, involved in endosomal protein transport. This Arabidopsis thaliana (Mouse-ear cress) protein is Vacuolar protein sorting-associated protein 55 homolog.